Reading from the N-terminus, the 361-residue chain is Transmembrane protein 116 (361 aa).

Helical transmembrane passes span 29-49 (WIQM…ILYA), 64-84 (FLLS…GLLF), 103-123 (TLYM…YTGL), 147-167 (LGPV…FVAG), 210-230 (CMAI…IFMG), 261-281 (MVLY…LATM), and 295-315 (VALY…NCLV).

Its subcellular location is the membrane. The sequence is that of Transmembrane protein 116 (tmem116) from Danio rerio (Zebrafish).